Consider the following 630-residue polypeptide: MPTTFKEIPRERPVTPLLDRADTPHGLRRLGEAELETLADELRLELLYSVGQTGGHFGAGLGVIELTIALHYVFDTPDDRLVWDVGHQAYPHKILTGRRARMSTLRQKEGVAAFPRRSESEYDTFGVGHSSTSISAALGMAIASRLQGSERKSIAVIGDGALTAGMAFEALNHAPEVAADMLVILNDNDMSISRNVGGLSNYLAKILSSRTYSSMREGSKKVLSRLPGAWEIARRTEEYAKGMLVPGTLFEELGWNYIGPIDGHDLPTLIATLRNMRDLKGPQFLHVVTKKGKGFAPAEVDPIGYHAITKLEPLNAPAAQKKISAPKYSGVFGQWICDMADADARLVGITPAMKEGSDLVAFSERFPERYFDVAIAEQHAVTLAAGMACEGSKPVVAIYSTFLQRGYDQLIHDVAVQNLDVLFAIDRAGLVGEDGPTHAGSFDLSYLRCIPGMLVMTPSDENELRKLLSTGYLHTGPAAVRYPRGTGPNAVIEASLDPLEIGKGVVRRQGQGVAILAFGVQLAEALVVAEKLDATVIDMRFVKPLDEALVSEAAANHELLVTLEENAVMGGAGAAVSEFLARANILKSVLHLGLPDVYVEHAKPAQMLTECGLDAQGIEAAINERLALIG.

Residues H87 and 128–130 (GHS) contribute to the thiamine diphosphate site. Residue D159 coordinates Mg(2+). Thiamine diphosphate-binding positions include 160–161 (GA), N188, F295, and E377. Residue N188 coordinates Mg(2+).

It belongs to the transketolase family. DXPS subfamily. In terms of assembly, homodimer. The cofactor is Mg(2+). It depends on thiamine diphosphate as a cofactor.

The enzyme catalyses D-glyceraldehyde 3-phosphate + pyruvate + H(+) = 1-deoxy-D-xylulose 5-phosphate + CO2. It functions in the pathway metabolic intermediate biosynthesis; 1-deoxy-D-xylulose 5-phosphate biosynthesis; 1-deoxy-D-xylulose 5-phosphate from D-glyceraldehyde 3-phosphate and pyruvate: step 1/1. Functionally, catalyzes the acyloin condensation reaction between C atoms 2 and 3 of pyruvate and glyceraldehyde 3-phosphate to yield 1-deoxy-D-xylulose-5-phosphate (DXP). In Pseudomonas syringae pv. syringae (strain B728a), this protein is 1-deoxy-D-xylulose-5-phosphate synthase.